Here is a 327-residue protein sequence, read N- to C-terminus: Methionyl-tRNA formyltransferase (327 aa).

Residue 111 to 114 coordinates (6S)-5,6,7,8-tetrahydrofolate; it reads SLLP.

It belongs to the Fmt family.

It carries out the reaction L-methionyl-tRNA(fMet) + (6R)-10-formyltetrahydrofolate = N-formyl-L-methionyl-tRNA(fMet) + (6S)-5,6,7,8-tetrahydrofolate + H(+). In terms of biological role, attaches a formyl group to the free amino group of methionyl-tRNA(fMet). The formyl group appears to play a dual role in the initiator identity of N-formylmethionyl-tRNA by promoting its recognition by IF2 and preventing the misappropriation of this tRNA by the elongation apparatus. The protein is Methionyl-tRNA formyltransferase of Synechococcus elongatus (strain ATCC 33912 / PCC 7942 / FACHB-805) (Anacystis nidulans R2).